We begin with the raw amino-acid sequence, 86 residues long: Large ribosomal subunit protein uL10 (86 aa).

Belongs to the universal ribosomal protein uL10 family. In terms of assembly, part of the ribosomal stalk of the 50S ribosomal subunit. The N-terminus interacts with L11 and the large rRNA to form the base of the stalk. The C-terminus forms an elongated spine to which L12 dimers bind in a sequential fashion forming a multimeric L10(L12)X complex.

Its function is as follows. Forms part of the ribosomal stalk, playing a central role in the interaction of the ribosome with GTP-bound translation factors. This is Large ribosomal subunit protein uL10 (rplJ) from Serratia marcescens.